Reading from the N-terminus, the 393-residue chain is uncharacterized protein (393 aa).

Topologically, residues 1 to 17 are cytoplasmic; the sequence is MVSKDQTSFNKRWTLGL. A helical transmembrane segment spans residues 18 to 38; that stretch reads LMLGLVIILWVLSSFLINLIF. The Vacuolar portion of the chain corresponds to 39–46; that stretch reads EDDSYRKP. Residues 47 to 67 traverse the membrane as a helical segment; that stretch reads FFITYTNTAAFIFYLFPTAKA. At 68-132 the chain is on the cytoplasmic side; that stretch reads VVVNYKDTGR…LYETIKLSAE (65 aa). A Phosphoserine modification is found at Ser-93. The helical transmembrane segment at 133–153 threads the bilayer; that stretch reads FCILWFTANLVTNASLAFTSV. The Vacuolar segment spans residues 154–156; the sequence is ASQ. Residues 157–176 traverse the membrane as a helical segment; that stretch reads TILSTTSSFFTLFIGAICHV. The Cytoplasmic portion of the chain corresponds to 177 to 182; it reads ESLSKS. Residues 183 to 200 form a helical membrane-spanning segment; it reads KVLGSFISFVGIIMVTKS. Over 201–219 the chain is Vacuolar; the sequence is DSHQRYQRHIADVSGDDND. A helical membrane pass occupies residues 220 to 240; the sequence is AVQVLIGNLLALAGAVLYGVY. At 241 to 257 the chain is on the cytoplasmic side; sequence STLLKREVGDETRVNMK. The chain crosses the membrane as a helical span at residues 258 to 278; the sequence is IFFGFVGLFNLLFLWPSLIVL. The Vacuolar portion of the chain corresponds to 279–292; that stretch reads DFFGWEPFSLPKDP. The chain crosses the membrane as a helical span at residues 293–313; it reads KVVVIIFVNCLITFVSDFCWA. Residues 314-321 lie on the Cytoplasmic side of the membrane; the sequence is KAMLLTSP. A helical transmembrane segment spans residues 322 to 342; it reads LTVTVGLSITIPLAMFGDVIF. The Vacuolar portion of the chain corresponds to 343-345; sequence KHK. Residues 346–366 form a helical membrane-spanning segment; sequence TMSALYLFGATLILGSFFIIN. Topologically, residues 367–393 are cytoplasmic; it reads KSSEEEHFENSITASNYESVEVPAANN.

This sequence belongs to the TPT transporter family.

The protein localises to the vacuole membrane. This is an uncharacterized protein from Saccharomyces cerevisiae (strain ATCC 204508 / S288c) (Baker's yeast).